We begin with the raw amino-acid sequence, 255 residues long: Ribosomal RNA small subunit methyltransferase A (255 aa).

S-adenosyl-L-methionine-binding residues include Asn-11, Leu-13, Gly-38, Glu-59, Asp-83, and Asn-101.

This sequence belongs to the class I-like SAM-binding methyltransferase superfamily. rRNA adenine N(6)-methyltransferase family. RsmA subfamily.

The protein resides in the cytoplasm. It catalyses the reaction adenosine(1518)/adenosine(1519) in 16S rRNA + 4 S-adenosyl-L-methionine = N(6)-dimethyladenosine(1518)/N(6)-dimethyladenosine(1519) in 16S rRNA + 4 S-adenosyl-L-homocysteine + 4 H(+). Specifically dimethylates two adjacent adenosines (A1518 and A1519) in the loop of a conserved hairpin near the 3'-end of 16S rRNA in the 30S particle. May play a critical role in biogenesis of 30S subunits. This is Ribosomal RNA small subunit methyltransferase A from Thiobacillus denitrificans (strain ATCC 25259 / T1).